The primary structure comprises 255 residues: tRNA pseudouridine synthase A (255 aa).

Catalysis depends on Asp-53, which acts as the Nucleophile. Residue Tyr-113 participates in substrate binding.

It belongs to the tRNA pseudouridine synthase TruA family. In terms of assembly, homodimer.

It carries out the reaction uridine(38/39/40) in tRNA = pseudouridine(38/39/40) in tRNA. Functionally, formation of pseudouridine at positions 38, 39 and 40 in the anticodon stem and loop of transfer RNAs. This Acidiphilium cryptum (strain JF-5) protein is tRNA pseudouridine synthase A.